The chain runs to 297 residues: ABSCISIC ACID-INSENSITIVE 5-like protein 2 (297 aa).

Serine 21, serine 43, and serine 81 each carry phosphoserine. Disordered stretches follow at residues 100–119 (IQQN…QPTL) and 138–157 (IPGS…SGAG). Threonine 118 bears the Phosphothreonine mark. Positions 146 to 157 (PVGGGSAGSGAG) are enriched in gly residues. The region spanning 225 to 288 (VERRQKRMIK…SVPPPDPKRQ (64 aa)) is the bZIP domain. The tract at residues 227–246 (RRQKRMIKNRESAARSRARK) is basic motif. The interval 253–267 (LEIKVSRLEEENERL) is leucine-zipper. Positions 272-297 (EVEKILPSVPPPDPKRQLRRTSSAPF) are disordered.

It belongs to the bZIP family. ABI5 subfamily. In terms of assembly, DNA-binding heterodimer with ABI5/DPBF1, DPBF2 or EEL/DPBF4. Interacts with the AFP proteins AFP1, AFP2, AFP3 and AFP4. As to expression, predominantly expressed in seeds.

It is found in the nucleus. In terms of biological role, binds to the embryo specification element and the ABA-responsive element (ABRE) of the Dc3 gene promoter. Could participate in abscisic acid-regulated gene expression during seed development. The sequence is that of ABSCISIC ACID-INSENSITIVE 5-like protein 2 (DPBF3) from Arabidopsis thaliana (Mouse-ear cress).